Consider the following 338-residue polypeptide: Ketol-acid reductoisomerase (NADP(+)) (338 aa).

The region spanning 1 to 181 is the KARI N-terminal Rossmann domain; that stretch reads MKVFYDKDAD…GGGRAGIIET (181 aa). NADP(+) is bound by residues 24–27, Arg-47, and Ser-52; that span reads YGSQ. His-107 is an active-site residue. Gly-133 contributes to the NADP(+) binding site. Residues 182-327 enclose the KARI C-terminal knotted domain; that stretch reads NFREETETDL…AKLRAMMPWI (146 aa). Residues Asp-190, Glu-194, Glu-226, and Glu-230 each coordinate Mg(2+). Ser-251 is a substrate binding site.

The protein belongs to the ketol-acid reductoisomerase family. The cofactor is Mg(2+).

It carries out the reaction (2R)-2,3-dihydroxy-3-methylbutanoate + NADP(+) = (2S)-2-acetolactate + NADPH + H(+). It catalyses the reaction (2R,3R)-2,3-dihydroxy-3-methylpentanoate + NADP(+) = (S)-2-ethyl-2-hydroxy-3-oxobutanoate + NADPH + H(+). The protein operates within amino-acid biosynthesis; L-isoleucine biosynthesis; L-isoleucine from 2-oxobutanoate: step 2/4. It participates in amino-acid biosynthesis; L-valine biosynthesis; L-valine from pyruvate: step 2/4. Functionally, involved in the biosynthesis of branched-chain amino acids (BCAA). Catalyzes an alkyl-migration followed by a ketol-acid reduction of (S)-2-acetolactate (S2AL) to yield (R)-2,3-dihydroxy-isovalerate. In the isomerase reaction, S2AL is rearranged via a Mg-dependent methyl migration to produce 3-hydroxy-3-methyl-2-ketobutyrate (HMKB). In the reductase reaction, this 2-ketoacid undergoes a metal-dependent reduction by NADPH to yield (R)-2,3-dihydroxy-isovalerate. This Polynucleobacter necessarius subsp. necessarius (strain STIR1) protein is Ketol-acid reductoisomerase (NADP(+)).